Reading from the N-terminus, the 296-residue chain is Haloalkane dehalogenase (296 aa).

The 125-residue stretch at 31 to 155 (PILFQHGNPT…QDRDLFQAFR (125 aa)) folds into the AB hydrolase-1 domain. Asn38 contributes to the chloride binding site. Residue Asp108 is the Nucleophile of the active site. A chloride-binding site is contributed by Trp109. The active-site Proton donor is the Glu132. Catalysis depends on His272, which acts as the Proton acceptor.

The protein belongs to the haloalkane dehalogenase family. Type 2 subfamily. Monomer.

It is found in the periplasm. The catalysed reaction is 1-haloalkane + H2O = a halide anion + a primary alcohol + H(+). The enzyme catalyses (3R,6R)-1,3,4,6-tetrachlorocyclohexa-1,4-diene + 2 H2O = 2,5-dichlorocyclohexa-2,5-dien-1,4-diol + 2 chloride + 2 H(+). Its pathway is xenobiotic degradation; gamma-hexachlorocyclohexane degradation. With respect to regulation, competitively inhibited by the key pollutants 1,2-dichloroethane (1,2-DCE) and 1,2-dichloropropane (1,2-DCP). Functionally, catalyzes hydrolytic cleavage of carbon-halogen bonds in halogenated aliphatic compounds, leading to the formation of the corresponding primary alcohols, halide ions and protons. Has a broad substrate specificity since not only monochloroalkanes (C3 to C10) but also dichloroalkanes (&gt; C3), bromoalkanes, and chlorinated aliphatic alcohols are good substrates. Shows almost no activity with 1,2-dichloroethane, but very high activity with the brominated analog. Is involved in the degradation of the important environmental pollutant gamma-hexachlorocyclohexane (gamma-HCH or lindane) as it also catalyzes conversion of 1,3,4,6-tetrachloro-1,4-cyclohexadiene (1,4-TCDN) to 2,5-dichloro-2,5-cyclohexadiene-1,4-diol (2,5-DDOL) via the intermediate 2,4,5-trichloro-2,5-cyclohexadiene-1-ol (2,4,5-DNOL). This degradation pathway allows S.japonicum UT26 to grow on gamma-HCH as the sole source of carbon and energy. In Sphingobium indicum (strain DSM 16413 / CCM 7287 / MTCC 6362 / UT26 / NBRC 101211 / UT26S) (Sphingobium japonicum), this protein is Haloalkane dehalogenase.